A 642-amino-acid polypeptide reads, in one-letter code: Threonine--tRNA ligase (642 aa).

The TGS domain occupies 1–61 (MPVITLPDGS…ETDAELSIIT (61 aa)). Positions 243–534 (DHRKIGKQLD…LIEEYAGRFP (292 aa)) are catalytic. Residues Cys-334, His-385, and His-511 each contribute to the Zn(2+) site.

The protein belongs to the class-II aminoacyl-tRNA synthetase family. As to quaternary structure, homodimer. Zn(2+) serves as cofactor.

The protein localises to the cytoplasm. It carries out the reaction tRNA(Thr) + L-threonine + ATP = L-threonyl-tRNA(Thr) + AMP + diphosphate + H(+). Catalyzes the attachment of threonine to tRNA(Thr) in a two-step reaction: L-threonine is first activated by ATP to form Thr-AMP and then transferred to the acceptor end of tRNA(Thr). Also edits incorrectly charged L-seryl-tRNA(Thr). This Shewanella sp. (strain ANA-3) protein is Threonine--tRNA ligase.